Consider the following 253-residue polypeptide: Trans-aconitate 2-methyltransferase (253 aa).

Belongs to the methyltransferase superfamily. Tam family.

It localises to the cytoplasm. The catalysed reaction is trans-aconitate + S-adenosyl-L-methionine = (E)-3-(methoxycarbonyl)pent-2-enedioate + S-adenosyl-L-homocysteine. Catalyzes the S-adenosylmethionine monomethyl esterification of trans-aconitate. The sequence is that of Trans-aconitate 2-methyltransferase from Azoarcus sp. (strain BH72).